Reading from the N-terminus, the 170-residue chain is Adenine phosphoribosyltransferase (170 aa).

The protein belongs to the purine/pyrimidine phosphoribosyltransferase family. In terms of assembly, homodimer.

It localises to the cytoplasm. It carries out the reaction AMP + diphosphate = 5-phospho-alpha-D-ribose 1-diphosphate + adenine. The protein operates within purine metabolism; AMP biosynthesis via salvage pathway; AMP from adenine: step 1/1. Its function is as follows. Catalyzes a salvage reaction resulting in the formation of AMP, that is energically less costly than de novo synthesis. The protein is Adenine phosphoribosyltransferase of Mycoplasmopsis agalactiae (strain NCTC 10123 / CIP 59.7 / PG2) (Mycoplasma agalactiae).